The following is a 529-amino-acid chain: V-set and immunoglobulin domain-containing protein 10 (529 aa).

Residues methionine 1–threonine 18 form the signal peptide. Ig-like C2-type domains are found at residues valine 19–serine 110 and proline 129–leucine 217. Residues glutamate 21–glycine 411 are Extracellular-facing. Asparagine 34, asparagine 35, asparagine 46, asparagine 135, asparagine 147, asparagine 159, asparagine 211, asparagine 269, asparagine 280, asparagine 284, asparagine 330, asparagine 357, and asparagine 376 each carry an N-linked (GlcNAc...) asparagine glycan. The cysteines at positions 40 and 96 are disulfide-linked. A disulfide bridge connects residues cysteine 150 and cysteine 199. In terms of domain architecture, Ig-like C2-type 3 spans proline 317–asparagine 403. The cysteines at positions 335 and 387 are disulfide-linked. The chain crosses the membrane as a helical span at residues glycine 412–valine 432. Topologically, residues threonine 433–valine 529 are cytoplasmic.

The protein resides in the membrane. This Danio rerio (Zebrafish) protein is V-set and immunoglobulin domain-containing protein 10 (vsig10).